The primary structure comprises 222 residues: GTP cyclohydrolase 1 (222 aa).

Residues Cys-111, His-114, and Cys-182 each contribute to the Zn(2+) site.

It belongs to the GTP cyclohydrolase I family. Toroid-shaped homodecamer, composed of two pentamers of five dimers.

It carries out the reaction GTP + H2O = 7,8-dihydroneopterin 3'-triphosphate + formate + H(+). Its pathway is cofactor biosynthesis; 7,8-dihydroneopterin triphosphate biosynthesis; 7,8-dihydroneopterin triphosphate from GTP: step 1/1. This chain is GTP cyclohydrolase 1, found in Citrobacter koseri (strain ATCC BAA-895 / CDC 4225-83 / SGSC4696).